The primary structure comprises 206 residues: Large ribosomal subunit protein uL4 (206 aa).

Belongs to the universal ribosomal protein uL4 family. As to quaternary structure, part of the 50S ribosomal subunit.

One of the primary rRNA binding proteins, this protein initially binds near the 5'-end of the 23S rRNA. It is important during the early stages of 50S assembly. It makes multiple contacts with different domains of the 23S rRNA in the assembled 50S subunit and ribosome. In terms of biological role, forms part of the polypeptide exit tunnel. The chain is Large ribosomal subunit protein uL4 from Jannaschia sp. (strain CCS1).